A 345-amino-acid polypeptide reads, in one-letter code: 3-isopropylmalate dehydrogenase (345 aa).

4 residues coordinate substrate: R94, R104, R132, and D216. The Mg(2+) site is built by D216, D240, and D244. 274 to 286 (GSAPDIAGQGIAN) lines the NAD(+) pocket.

It belongs to the isocitrate and isopropylmalate dehydrogenases family. LeuB type 1 subfamily. Homodimer. Mg(2+) is required as a cofactor. Mn(2+) serves as cofactor.

Its subcellular location is the cytoplasm. The catalysed reaction is (2R,3S)-3-isopropylmalate + NAD(+) = 4-methyl-2-oxopentanoate + CO2 + NADH. Its pathway is amino-acid biosynthesis; L-leucine biosynthesis; L-leucine from 3-methyl-2-oxobutanoate: step 3/4. Functionally, catalyzes the oxidation of 3-carboxy-2-hydroxy-4-methylpentanoate (3-isopropylmalate) to 3-carboxy-4-methyl-2-oxopentanoate. The product decarboxylates to 4-methyl-2 oxopentanoate. In Streptococcus pneumoniae (strain ATCC BAA-255 / R6), this protein is 3-isopropylmalate dehydrogenase.